The chain runs to 379 residues: Cytochrome b (379 aa).

The next 4 helical transmembrane spans lie at 34 to 54, 78 to 100, 113 to 133, and 179 to 199; these read YGSL…MLAM, WMIR…VHIG, TWNI…LGYV, and FFSL…IHLL. His84 and His98 together coordinate heme b. Heme b contacts are provided by His183 and His197. His202 is an a ubiquinone binding site. A run of 4 helical transmembrane segments spans residues 225–245, 289–309, 320–340, and 345–365; these read FSIK…FLVL, LGGV…PIFS, WSGM…WIGA, and APYI…FFWM.

Belongs to the cytochrome b family. The main subunits of complex b-c1 are: cytochrome b, cytochrome c1 and the Rieske protein. Requires heme b as cofactor.

It is found in the mitochondrion inner membrane. In terms of biological role, component of the ubiquinol-cytochrome c reductase complex (complex III or cytochrome b-c1 complex) that is part of the mitochondrial respiratory chain. The b-c1 complex mediates electron transfer from ubiquinol to cytochrome c. Contributes to the generation of a proton gradient across the mitochondrial membrane that is then used for ATP synthesis. The sequence is that of Cytochrome b (mt:Cyt-b) from Epiperipatus biolleyi (Velvet worm).